The chain runs to 363 residues: tRNA(Met) cytidine acetate ligase (363 aa).

ATP is bound by residues 7 to 20 (IAEY…HKYL), Gly96, Asn152, and Arg175.

This sequence belongs to the TmcAL family.

The protein localises to the cytoplasm. It carries out the reaction cytidine(34) in elongator tRNA(Met) + acetate + ATP = N(4)-acetylcytidine(34) in elongator tRNA(Met) + AMP + diphosphate. Catalyzes the formation of N(4)-acetylcytidine (ac(4)C) at the wobble position of elongator tRNA(Met), using acetate and ATP as substrates. First activates an acetate ion to form acetyladenylate (Ac-AMP) and then transfers the acetyl group to tRNA to form ac(4)C34. This chain is tRNA(Met) cytidine acetate ligase, found in Streptococcus suis (strain 98HAH33).